A 93-amino-acid polypeptide reads, in one-letter code: Cell division protein FtsB (93 aa).

The Cytoplasmic portion of the chain corresponds to 1-3 (MRL). A helical transmembrane segment spans residues 4-21 (FILVLTLLFGWLQYTLWF). The Periplasmic segment spans residues 22-93 (GKNGVSDYYT…FYRIVGEENQ (72 aa)). Positions 42–75 (VNTKLQARNSEMYAEIDDLKQGLDAIEERARHEL) form a coiled coil.

This sequence belongs to the FtsB family. As to quaternary structure, part of a complex composed of FtsB, FtsL and FtsQ.

The protein resides in the cell inner membrane. In terms of biological role, essential cell division protein. May link together the upstream cell division proteins, which are predominantly cytoplasmic, with the downstream cell division proteins, which are predominantly periplasmic. The polypeptide is Cell division protein FtsB (Vibrio vulnificus (strain YJ016)).